The following is a 635-amino-acid chain: MGFSGSRAWSKWLTICLAITHPFSVTAKSAADYYVHSLPGQPEGPLLKMHAGHIEISPETSGNLFFWHFENRHIADKPRTVVWLNGGPGCSSEDGALMEIGPYRLIDKETLNYTEGSWDEFANLLFVDQPVGTGFSYGSTEHYVHELDEMASQFVTFLEKWFEIFPHYEPDDLYFAGESYAGQYIPYIARAVLDRNKKQDVQANNRIWNLKGLLIGNGWISPQHQYPAYLPYVYQEGVVQAGTQEANLIEAKAAKCMKELNVEDTTGTVHIPDCEDILQAILDYTHKGKRCINMYDIRLTDDYSACGMNWPPDLRDIQPYLRRKDVVKALHINEEKQTGWTECAGAVGSSLKARNSKPAVELLPGLLEEGLPILLFSGQKDLICNHVGTEDMIKNMKWSGGTGFELSPGVWAPRQDWTFEGEPAGIYQQARNLTYVLFYNASHMVPFDYPRRSRDMLDKFLGVDITHIGGDPADSRIDGEKGPTTSVGAHPNSTAAAEREKEKLNTAAWKAYYKSGEVALVIVAIAAFAWGIFIWRSRRKHQSSGYRSIYPMLGLNSTGSLGQISHKHSRRNGDIEAADFDETELDDQPSQAFLSRSSRDGDAYAVGEEGSDEEDGASDGQQPMFDQSRGEEGRS.

Positions 1-27 (MGFSGSRAWSKWLTICLAITHPFSVTA) are cleaved as a signal peptide. Residues 28–514 (KSAADYYVHS…NTAAWKAYYK (487 aa)) lie on the Lumenal side of the membrane. N112 is a glycosylation site (N-linked (GlcNAc...) asparagine). Catalysis depends on residues S179 and D381. N432 and N440 each carry an N-linked (GlcNAc...) asparagine glycan. Residue H443 is part of the active site. The interval 472-497 (PADSRIDGEKGPTTSVGAHPNSTAAA) is disordered. Residues 483-495 (PTTSVGAHPNSTA) are compositionally biased toward polar residues. The N-linked (GlcNAc...) asparagine glycan is linked to N492. Residues 515–535 (SGEVALVIVAIAAFAWGIFIW) form a helical membrane-spanning segment. At 536-635 (RSRRKHQSSG…DQSRGEEGRS (100 aa)) the chain is on the cytoplasmic side. The tract at residues 583–635 (TELDDQPSQAFLSRSSRDGDAYAVGEEGSDEEDGASDGQQPMFDQSRGEEGRS) is disordered.

The protein belongs to the peptidase S10 family.

The protein resides in the golgi apparatus. It localises to the trans-Golgi network membrane. It carries out the reaction Preferential release of a C-terminal arginine or lysine residue.. Functionally, protease with a carboxypeptidase B-like function involved in the C-terminal processing of the lysine and arginine residues from protein precursors. Promotes cell fusion and is involved in the programmed cell death. The chain is Pheromone-processing carboxypeptidase KEX1 (KEX1) from Paracoccidioides brasiliensis (strain Pb18).